A 670-amino-acid polypeptide reads, in one-letter code: Eukaryotic translation initiation factor 3 subunit B (670 aa).

The RRM domain maps to 30–116; that stretch reads KFIVVDNIPV…HTLKVNLLDD (87 aa). WD repeat units follow at residues 183-221, 222-269, 466-507, and 509-553; these read SVSL…QVNL, FEHR…KLRS, LENR…SYGT, and EHLQ…VYSV. Residues 568–600 are a coiled coil; it reads KFMLTNKEINQIKQNIKKYQEKFDKQDEDDNKA.

Belongs to the eIF-3 subunit B family. In terms of assembly, component of the eukaryotic translation initiation factor 3 (eIF-3) complex.

The protein localises to the cytoplasm. RNA-binding component of the eukaryotic translation initiation factor 3 (eIF-3) complex, which is involved in protein synthesis of a specialized repertoire of mRNAs and, together with other initiation factors, stimulates binding of mRNA and methionyl-tRNAi to the 40S ribosome. The eIF-3 complex specifically targets and initiates translation of a subset of mRNAs involved in cell proliferation. The sequence is that of Eukaryotic translation initiation factor 3 subunit B (eif3B) from Dictyostelium discoideum (Social amoeba).